We begin with the raw amino-acid sequence, 302 residues long: Recombination-associated protein RdgC (302 aa).

Belongs to the RdgC family.

It localises to the cytoplasm. The protein localises to the nucleoid. May be involved in recombination. The protein is Recombination-associated protein RdgC of Xylella fastidiosa (strain 9a5c).